Here is a 1046-residue protein sequence, read N- to C-terminus: Phospholipase D zeta 2 (1046 aa).

Residues 45 to 205 (PKAAIVSVSR…KEVCKFLEVS (161 aa)) form the PX domain. The PH domain occupies 215 to 343 (SKMKEGYVTV…WVKAVDEAGC (129 aa)). A PLD phosphodiesterase 1 domain is found at 472-499 (YLWSHHEKIVIVDYQVCFIGGLDLCFGR). Catalysis depends on residues His-477, Lys-479, and Asp-484. Residues 653–667 (GRGDLKLDSGARQDP) show a composition bias toward basic and acidic residues. Residues 653 to 677 (GRGDLKLDSGARQDPGETSEESDLD) are disordered. Positions 847-874 (SQIYVHSKLMIVDDRIAVIGSSNINDRS) constitute a PLD phosphodiesterase 2 domain. Catalysis depends on residues His-852, Lys-854, and Asp-859.

It belongs to the phospholipase D family. PXPH-PLD subfamily. Requires Does not require Ca(2+) or any other cation for activity. as cofactor. As to expression, expressed in seedlings, roots, leaves, stems and flowers. Highest expression in roots. Detected only in the meristematic regions up to 4 days after germination and then at later stages in all tissues.

It catalyses the reaction a 1,2-diacyl-sn-glycero-3-phosphocholine + H2O = a 1,2-diacyl-sn-glycero-3-phosphate + choline + H(+). In terms of biological role, hydrolyzes glycerol-phospholipids at the terminal phosphodiesteric bond to generate phosphatidic acids (PA). Phosphatidylcholine-selective. Regulates vesicle trafficking and auxin responses. Required for the normal cycling of PIN-2 containing vesicles. Contributes to the supply of inorganic phosphorus for cell metabolism and diacylglycerol moieties for galactolipid synthesis in phosphorus-starved roots. Involved in root elongation during phosphate limitation. This is Phospholipase D zeta 2 from Arabidopsis thaliana (Mouse-ear cress).